The primary structure comprises 256 residues: Lysine-rich coiled-coil protein 1 (256 aa).

2 disordered regions span residues R62–V84 and T144–F256. The segment covering P64–Q79 has biased composition (polar residues). 2 stretches are compositionally biased toward basic and acidic residues: residues H161–K188 and K218–E227. A coiled-coil region spans residues E209–M247.

This is Lysine-rich coiled-coil protein 1 (Krcc1) from Mus musculus (Mouse).